Consider the following 325-residue polypeptide: Probable cell division protein WhiA (325 aa).

Positions 273–306 (SLEELGALADPPLTKDAVAGRIRRLLALADKRAN) form a DNA-binding region, H-T-H motif.

Belongs to the WhiA family.

In terms of biological role, involved in cell division and chromosome segregation. This Parafrankia sp. (strain EAN1pec) protein is Probable cell division protein WhiA.